A 277-amino-acid polypeptide reads, in one-letter code: Tumor necrosis factor-inducible gene 6 protein (277 aa).

The first 17 residues, 1-17 (MIILIYLFLLLWEDTQG), serve as a signal peptide directing secretion. In terms of domain architecture, Link spans 36-129 (GVYHREARSG…SERWDAYCYN (94 aa)). Disulfide bonds link C58/C127, C82/C103, and C135/C161. A glycan (N-linked (GlcNAc...) asparagine) is linked at N118. The CUB domain maps to 135–247 (CGGVFTDPKQ…GGFQIKYVAM (113 aa)). Residues E183, D191, D232, S234, and V235 each contribute to the Ca(2+) site. A disulfide bond links C188 and C210. N-linked (GlcNAc...) asparagine glycosylation occurs at N258.

Interacts (via Link domain) with inter-alpha-inhibitor (I-alpha-I) component bikunin. Interacts with ITIH2/HC2; this interaction is required for transesterification of the HC to hyaluronan. Interacts (via Link and CUB domains) with ITIH1. Chondroitin sulfate may be required for the stability of the complex. Interacts (via Link domain) with various C-X-C and C-C chemokines including PF4, CXCL8, CXCL11, CXCL12, CCL2, CCL7, CCL19, CCL21, and CCL27; this interaction interferes with chemokine binding to glycosaminoglycans. Interacts (primarily via Link domain) with BMP2; this interaction is inhibited by hyaluronan. Interacts (via both Link and CUB domains) with TNFSF11. Interacts (via CUB domain) with FN1 (via type III repeats 9-14); this interaction enhances fibronectin fibril assembly. TNFAIP6 may act as a bridging molecule between FN1 and THBS1. In terms of processing, N-glycosylated. As to expression, expressed in airway epithelium and submucosal gland (at protein level). Colocalizes with bikunin at the ciliary border. Present in bronchoalveolar lavage fluid (at protein level). Expressed in mesenchymal stem cells. Found in the synovial fluid of patients with rheumatoid arthritis.

The protein localises to the secreted. Its function is as follows. Major regulator of extracellular matrix organization during tissue remodeling. Catalyzes the transfer of a heavy chain (HC) from inter-alpha-inhibitor (I-alpha-I) complex to hyaluronan. Cleaves the ester bond between the C-terminus of the HC and GalNAc residue of the chondroitin sulfate chain in I-alpha-I complex followed by transesterification of the HC to hyaluronan. In the process, potentiates the antiprotease function of I-alpha-I complex through release of free bikunin. Acts as a catalyst in the formation of hyaluronan-HC oligomers and hyaluronan-rich matrix surrounding the cumulus cell-oocyte complex, a necessary step for oocyte fertilization. Assembles hyaluronan in pericellular matrices that serve as platforms for receptor clustering and signaling. Enables binding of hyaluronan deposited on the surface of macrophages to LYVE1 on lymphatic endothelium and facilitates macrophage extravasation. Alters hyaluronan binding to functionally latent CD44 on vascular endothelium, switching CD44 into an active state that supports leukocyte rolling. Modulates the interaction of chemokines with extracellular matrix components and proteoglycans on endothelial cell surface, likely preventing chemokine gradient formation. In a negative feedback mechanism, may limit excessive neutrophil recruitment at inflammatory sites by antagonizing the association of CXCL8 with glycosaminoglycans on vascular endothelium. Has a role in osteogenesis and bone remodeling. Inhibits BMP2-dependent differentiation of mesenchymal stem cell to osteoblasts. Protects against bone erosion during inflammation by inhibiting TNFSF11/RANKL-dependent osteoclast activation. The protein is Tumor necrosis factor-inducible gene 6 protein (TNFAIP6) of Homo sapiens (Human).